A 590-amino-acid polypeptide reads, in one-letter code: Vesicular glutamate transporter 3 (590 aa).

The Cytoplasmic portion of the chain corresponds to 1-76 (MPLGGFAGLK…CGCFGLPKRY (76 aa)). Residues 77 to 97 (IIAMLSGLGFCISFGIRCNLG) form a helical membrane-spanning segment. The Vesicular segment spans residues 98-130 (VAIVEMVNNNTVYINGTAVMQPAQFNWDPETVG). 2 N-linked (GlcNAc...) asparagine glycosylation sites follow: Asn-106 and Asn-112. A helical membrane pass occupies residues 131–151 (LIHGSFFWGYIVTQIPGGFIS). The Cytoplasmic portion of the chain corresponds to 152–153 (NK). Residues 154 to 174 (LAANRVFGAAIFLTSVLNMFI) form a helical membrane-spanning segment. Over 175-182 (PSAARVHY) the chain is Vesicular. The chain crosses the membrane as a helical span at residues 183-203 (GCVMFVRILQGLVEGVTYPAC). The Cytoplasmic portion of the chain corresponds to 204 to 221 (HGMWSKWAPPLERSRLAT). A helical membrane pass occupies residues 222–242 (TSFCGSYAGAVIAMPLAGILV). At 243–249 (QYVGWPS) the chain is on the vesicular side. The helical transmembrane segment at 250 to 270 (VFYIYGVFGIIWYIFWILLAY) threads the bilayer. At 271–315 (NSPAVHPTISEEERNYIETSIGEGANLMSSTEKFKTPWREFFTSM) the chain is on the cytoplasmic side. A helical transmembrane segment spans residues 316 to 336 (PVYAIIVANFCRSWTFYLLLI). Over 337–354 (SQPAYFEEVFGFPISKVG) the chain is Vesicular. Residues 355-375 (ILSAVPHMVMTIIVPIGGQLA) traverse the membrane as a helical segment. At 376 to 391 (DFLRSRKILSTTTVRK) the chain is on the cytoplasmic side. The chain crosses the membrane as a helical span at residues 392 to 412 (IMNCGGFGMEATLLLVVGFSH). At 413-414 (TR) the chain is on the vesicular side. The helical transmembrane segment at 415 to 435 (AVAISFLILAVGFSGFAISGF) threads the bilayer. The Cytoplasmic portion of the chain corresponds to 436–448 (NVNHLDIAPRYAS). Residues 449–469 (ILMGISNGVGTLSGMVCPLIV) traverse the membrane as a helical segment. At 470 to 482 (GALTKHKTRLEWQ) the chain is on the vesicular side. A helical transmembrane segment spans residues 483–503 (HVFVIASMVHYTGVIFYAIFA). The Cytoplasmic segment spans residues 504 to 587 (SGEKQDWADP…NHYENGEYQT (84 aa)). A compositionally biased stretch (acidic residues) spans 526-535 (EDELADETEP). Residues 526–590 (EDELADETEP…ENGEYQTQYQ (65 aa)) are disordered. Residues 536–557 (SSDSGLATRQKTYGTTDNSSGR) show a composition bias toward polar residues.

Belongs to the major facilitator superfamily. Sodium/anion cotransporter family. VGLUT subfamily.

It localises to the cytoplasmic vesicle. It is found in the secretory vesicle. Its subcellular location is the synaptic vesicle membrane. The protein resides in the cell membrane. The protein localises to the synapse. It localises to the synaptosome. It carries out the reaction L-glutamate(out) = L-glutamate(in). The catalysed reaction is 3 Na(+)(out) + phosphate(out) = 3 Na(+)(in) + phosphate(in). The enzyme catalyses chloride(in) = chloride(out). With respect to regulation, the L-glutamate uniporter activity exhibits a biphasic dependence on chloride concentration. Chloride channel activity is allosterically activated by lumenal H(+) and Cl(-) leading to synaptic vesicles acidification. The glutamate transport activity is allosterically activated by lumenal H(+) and Cl(-), preventing non-vesicular L-glutamate release. Functionally, multifunctional transporter that transports L-glutamate as well as multiple ions such as chloride, sodium and phosphate. At the synaptic vesicle membrane, mainly functions as an uniporter that mediates the uptake of L-glutamate into synaptic vesicles at presynaptic nerve terminals of excitatory neural cells. The L-glutamate uniporter activity is electrogenic and is driven by the proton electrochemical gradient, mainly by the electrical gradient established by the vacuolar H(+)-ATPase across the synaptic vesicle membrane. In addition, functions as a chloride channel that allows a chloride permeation through the synaptic vesicle membrane that affects the proton electrochemical gradient and promotes synaptic vesicles acidification. At the plasma membrane, following exocytosis, functions as a symporter of Na(+) and phosphate from the extracellular space to the cytoplasm allowing synaptic phosphate homeostasis regulation. The symporter activity is electrogenic. Moreover, operates synergistically with SLC18A3/VACHT under a constant H(+) gradient, thereby allowing striatal vesicular acetylcholine uptake. This chain is Vesicular glutamate transporter 3, found in Danio rerio (Zebrafish).